A 399-amino-acid chain; its full sequence is (R)-2-hydroxy-4-methylpentanoate CoA-transferase (399 aa).

Asp-171 functions as the Nucleophile in the catalytic mechanism.

It belongs to the CoA-transferase III family. Homodimer.

It catalyses the reaction 4-methylpentanoyl-CoA + (2R)-hydroxy-4-methylpentanoate = (R)-2-hydroxy-4-methylpentanoyl-CoA + 4-methylpentanoate. The protein operates within amino-acid degradation; L-leucine degradation. Involved in the reductive branch of L-leucine fermentation. Catalyzes the transfer of the CoA moiety from 4-methylpentanoyl-CoA (isocaproyl-CoA) to (R)-2-hydroxy-4-methylpentanoate ((R)-2-hydroxyisocaproate), leading to the formation of (R)-2-hydroxy-4-methylpentanoyl-CoA. Other CoA thioesters, such as acetyl-CoA or butyryl-CoA, are not accepted as substrates. In Clostridioides difficile (Peptoclostridium difficile), this protein is (R)-2-hydroxy-4-methylpentanoate CoA-transferase.